The primary structure comprises 1124 residues: Phytochrome A (1124 aa).

Over residues 1 to 19 the composition is skewed to low complexity; that stretch reads MSTTRPSQSSNNSGRSRNS. The disordered stretch occupies residues 1–21; that stretch reads MSTTRPSQSSNNSGRSRNSAR. The 184-residue stretch at 218–401 folds into the GAF domain; sequence SMERLCDTMV…VFAIHVNKEI (184 aa). Residue C323 participates in phytochromobilin binding. 2 PAS domains span residues 617–687 and 750–821; these read VTSE…LQGE and DYKA…VNFG. One can recognise a Histidine kinase domain in the interval 901–1120; sequence YMKRQIRNPL…ILSVELAAAH (220 aa).

The protein belongs to the phytochrome family. Homodimer. Contains one covalently linked phytochromobilin chromophore.

Its function is as follows. Regulatory photoreceptor which exists in two forms that are reversibly interconvertible by light: the Pr form that absorbs maximally in the red region of the spectrum and the Pfr form that absorbs maximally in the far-red region. Photoconversion of Pr to Pfr induces an array of morphogenic responses, whereas reconversion of Pfr to Pr cancels the induction of those responses. Pfr controls the expression of a number of nuclear genes including those encoding the small subunit of ribulose-bisphosphate carboxylase, chlorophyll A/B binding protein, protochlorophyllide reductase, rRNA, etc. It also controls the expression of its own gene(s) in a negative feedback fashion. In Pisum sativum (Garden pea), this protein is Phytochrome A (PHYA).